The chain runs to 581 residues: MRTSQYLLATLKEAPKNCKAISHQLMLRAGLIRQVSSGLYTWLPTGLRVLRKIENIIREEMSKIGAIEIAMPIVQPARLWKKSGRWTGYGTELLRFKNRNNQEFVLGPTHEEMVSEIICKETMLYKQFPLIVYQIHTKYRDEARPRSGVIRAREFIMKDGYSFHINQKSLQNTYNNMYQTYHTIFNRIGLNFCVVQAEPGKIGGALSHEFQAYSENGEDSIAVPMIPDNNLIDFQLSNDVIPIKIQPKTAVETMQLIAAPNIRSVEELINQFNLPIHQFVKTIIVRAKNKHINNDYSLLGLVIRADHQISLKKIAMIPQIHIPLSCIEPEEIQKITGAQPNLLGPINLSIPLIIDYNVAKMNDFVAGSNMSGKYFFGVNWNRDILFSKVADLHEVLHHNSYTNKKNILSIHNCIEIGHIFQLGQKYLNLHTNYSQKNNEHKHNLSMEMGCYGIGITRIIAVIIEQNYDKNGILWPDVIAPFKLAIIPIDMYRSVNVRNIAEKIYTQLLSVIGIDILIDDRKEYPGTMFADIDLIGIPHILIISDRSLANQEVEYKYRKKNKIEKIKLEMLIRYLIEKIVSS.

The protein belongs to the class-II aminoacyl-tRNA synthetase family. ProS type 1 subfamily. In terms of assembly, homodimer.

Its subcellular location is the cytoplasm. It carries out the reaction tRNA(Pro) + L-proline + ATP = L-prolyl-tRNA(Pro) + AMP + diphosphate. Its function is as follows. Catalyzes the attachment of proline to tRNA(Pro) in a two-step reaction: proline is first activated by ATP to form Pro-AMP and then transferred to the acceptor end of tRNA(Pro). As ProRS can inadvertently accommodate and process non-cognate amino acids such as alanine and cysteine, to avoid such errors it has two additional distinct editing activities against alanine. One activity is designated as 'pretransfer' editing and involves the tRNA(Pro)-independent hydrolysis of activated Ala-AMP. The other activity is designated 'posttransfer' editing and involves deacylation of mischarged Ala-tRNA(Pro). The misacylated Cys-tRNA(Pro) is not edited by ProRS. This is Proline--tRNA ligase from Blochmanniella pennsylvanica (strain BPEN).